The sequence spans 485 residues: MRSRVAVRACHKVCRCLLSGFGGRVDAGQPELLTERSSPKGGHVKSHAELEGNGEHPEAPGSGEGSEALLEICQRRHFLSGSKQQLSRDSLLSGCHPGFGPLGVELRKNLAAEWWTSVVVFREQVFPVDALHHKPGPLLPGDSAFRLVSAETLREILQDKELSKEQLVAFLENVLKTSGKLRENLLHGALEHYVNCLDLVNKRLPYGLAQIGVCFHPVFDTKQIRNGVKSIGEKTEASLVWFTPPRTSNQWLDFWLRHRLQWWRKFAMSPSNFSSSDCQDEEGRKGNKLYYNFPWGKELIETLWNLGDHELLHMYPGNVSKLHGRDGRKNVVPCVLSVNGDLDRGMLAYLYDSFQLTENSFTRKKNLHRKVLKLHPCLAPIKVALDVGRGPTLELRQVCQGLFNELLENGISVWPGYLETMQSSLEQLYSKYDEMSILFTVLVTETTLENGLIHLRSRDTTMKEMMHISKLKDFLIKYISSAKNV.

A disordered region spans residues Gly-28 to Gly-65. Ser-38 carries the post-translational modification Phosphoserine. Over residues Ser-46 to Glu-58 the composition is skewed to basic and acidic residues.

In terms of assembly, heterotrimer composed of a catalytic subunit and a homodimer of accessory subunits (POLG:POLG2).

Its subcellular location is the mitochondrion. It localises to the mitochondrion matrix. The protein resides in the mitochondrion nucleoid. In terms of biological role, accessory subunit of DNA polymerase gamma solely responsible for replication of mitochondrial DNA (mtDNA). Acts as an allosteric regulator of the holoenzyme activities. Enhances the polymerase activity and the processivity of POLG by increasing its interactions with the DNA template. Suppresses POLG exonucleolytic proofreading especially toward homopolymeric templates bearing mismatched termini. Binds to single-stranded DNA. The chain is DNA polymerase subunit gamma-2 from Homo sapiens (Human).